The sequence spans 427 residues: MATSWGAVFMLIIACVGSTVFYREQQTWFEGVFLSSMCPINVSAGTFYGIMFDAGSTGTRIHVYTFVQKTAGQLPFLEGEIFDSVKPGLSAFVDQPKQGAETVQELLEVAKDSIPRSHWERTPVVLKATAGLRLLPEQKAQALLLEVEEIFKNSPFLVPDGSVSIMDGSYEGILAWVTVNFLTGQLHGRGQETVGTLDLGGASTQITFLPQFEKTLEQTPRGYLTSFEMFNSTFKLYTHSYLGFGLKAARLATLGALEAKGTDGHTFRSACLPRWLEAEWIFGGVKYQYGGNQEGEMGFEPCYAEVLRVVQGKLHQPEEVRGSAFYAFSYYYDRAADTHLIDYEKGGVLKVEDFERKAREVCDNLGSFSSGSPFLCMDLTYITALLKDGFGFADGTLLQLTKKVNNIETGWALGATFHLLQSLGITS.

An N-terminal signal peptide occupies residues 1 to 24; that stretch reads MATSWGAVFMLIIACVGSTVFYRE. Catalysis depends on Glu-171, which acts as the Proton acceptor. Residue Asn-231 is glycosylated (N-linked (GlcNAc...) asparagine). 2 disulfide bridges follow: Cys-271-Cys-302 and Cys-362-Cys-376.

It belongs to the GDA1/CD39 NTPase family. Monomer; active form. Homodimer; disulfide-linked. Homodimers are enzymatically inactive. Requires Ca(2+) as cofactor. Mg(2+) is required as a cofactor. In terms of processing, N-glycosylated; high-mannose type. In terms of tissue distribution, ubiquitous.

The protein resides in the endoplasmic reticulum. It localises to the secreted. It catalyses the reaction a ribonucleoside 5'-diphosphate + H2O = a ribonucleoside 5'-phosphate + phosphate + H(+). The catalysed reaction is GDP + H2O = GMP + phosphate + H(+). The enzyme catalyses UDP + H2O = UMP + phosphate + H(+). It carries out the reaction IDP + H2O = IMP + phosphate + H(+). It catalyses the reaction CDP + H2O = CMP + phosphate + H(+). The catalysed reaction is ADP + H2O = AMP + phosphate + H(+). It participates in protein modification; protein glycosylation. In terms of biological role, hydrolyzes nucleoside diphosphates with a preference for GDP, IDP and UDP compared to ADP and CDP. In the lumen of the endoplasmic reticulum, hydrolyzes UDP that acts as an end-product feedback inhibitor of the UDP-Glc:glycoprotein glucosyltransferases. UMP can be transported back by an UDP-sugar antiporter to the cytosol where it is consumed to regenerate UDP-glucose. Therefore, it positively regulates protein reglucosylation by clearing UDP from the ER lumen and by promoting the regeneration of UDP-glucose. Protein reglucosylation is essential to proper glycoprotein folding and quality control in the ER. The chain is Ectonucleoside triphosphate diphosphohydrolase 5 (Entpd5) from Mus musculus (Mouse).